The primary structure comprises 240 residues: Ribosomal RNA small subunit methyltransferase G (240 aa).

Residues glycine 80, phenylalanine 85, 103–105 (DSS), 131–132 (AE), and arginine 150 each bind S-adenosyl-L-methionine.

It belongs to the methyltransferase superfamily. RNA methyltransferase RsmG family.

The protein localises to the cytoplasm. Functionally, specifically methylates the N7 position of a guanine in 16S rRNA. The polypeptide is Ribosomal RNA small subunit methyltransferase G (Thermoanaerobacter sp. (strain X514)).